The following is a 546-amino-acid chain: ATP-dependent rRNA helicase RRP3 (546 aa).

The disordered stretch occupies residues 1–108 (MSDFKRRKLE…DEEAEAQAAA (108 aa)). Acidic residues-rich tracts occupy residues 60-77 (SEED…EEED) and 94-103 (EAEQSDEEAE). The Q motif motif lies at 115–143 (KTFADLGVREELCDACENLGYKTATPIQT). The region spanning 146–318 (IPLALAGKDI…RAALKNPVRV (173 aa)) is the Helicase ATP-binding domain. Position 159-166 (159-166 (AETGSGKT)) interacts with ATP. The DEAD box motif lies at 265-268 (DEAD). The Helicase C-terminal domain occupies 342–490 (YKDLYLIHLL…EEKVSRDEVM (149 aa)). Basic and acidic residues predominate over residues 504–515 (VREMKDLHDQRK). Residues 504–546 (VREMKDLHDQRKSGRGGRGGGRGGGRGGRGRGGRRDNMDMDEG) form a disordered region. Over residues 519–530 (GGRGGGRGGGRG) the composition is skewed to gly residues. The span at 536–546 (GRRDNMDMDEG) shows a compositional bias: basic and acidic residues.

It belongs to the DEAD box helicase family. DDX47/RRP3 subfamily. As to quaternary structure, interacts with the SSU processome.

Its subcellular location is the nucleus. It carries out the reaction ATP + H2O = ADP + phosphate + H(+). ATP-dependent rRNA helicase required for pre-ribosomal RNA processing. Involved in the maturation of the 35S-pre-rRNA and to its cleavage to mature 18S rRNA. The sequence is that of ATP-dependent rRNA helicase RRP3 from Phaeosphaeria nodorum (strain SN15 / ATCC MYA-4574 / FGSC 10173) (Glume blotch fungus).